The chain runs to 795 residues: Levansucrase (795 aa).

A signal peptide spans 1–36 (METKVRKKMYKKGKFWVVATITTAMLTGIGLSSVQA). 2 stretches are compositionally biased toward polar residues: residues 42–66 (TQVS…SAAE) and 112–130 (QAAT…GQTN). Disordered stretches follow at residues 42–83 (TQVS…NPAA) and 103–138 (ESKA…ATKE). 3 residues coordinate sucrose: Trp245, Asp246, and Ser315. Residue Asp246 is the Nucleophile of the active site. Asp394 is a Ca(2+) binding site. Positions 399 and 400 each coordinate sucrose. Residues Gln425, Asn464, and Asp496 each contribute to the Ca(2+) site. Glu497 provides a ligand contact to sucrose. Residue Glu499 is the Proton donor/acceptor of the active site. Arg517 serves as a coordination point for sucrose. A helical membrane pass occupies residues 774 to 794 (GNSFFAALLALFSAFCVSIGF).

Belongs to the glycosyl hydrolase 68 family.

It localises to the cell membrane. Its subcellular location is the cell surface. It catalyses the reaction [6)-beta-D-fructofuranosyl-(2-&gt;](n) alpha-D-glucopyranoside + sucrose = [6)-beta-D-fructofuranosyl-(2-&gt;](n+1) alpha-D-glucopyranoside + D-glucose. Ca(2+) may play an important structural role and promote stability of levansucrase. Catalyzes the synthesis of levan, a fructose polymer, by transferring the fructosyl moiety from sucrose to a growing acceptor molecule. Also displays sucrose hydrolase activity. This is Levansucrase from Streptococcus mutans serotype c (strain ATCC 700610 / UA159).